Reading from the N-terminus, the 90-residue chain is Small ribosomal subunit protein uS15 (90 aa).

This sequence belongs to the universal ribosomal protein uS15 family. In terms of assembly, part of the 30S ribosomal subunit. Forms a bridge to the 50S subunit in the 70S ribosome, contacting the 23S rRNA.

In terms of biological role, one of the primary rRNA binding proteins, it binds directly to 16S rRNA where it helps nucleate assembly of the platform of the 30S subunit by binding and bridging several RNA helices of the 16S rRNA. Its function is as follows. Forms an intersubunit bridge (bridge B4) with the 23S rRNA of the 50S subunit in the ribosome. This is Small ribosomal subunit protein uS15 from Wolbachia sp. subsp. Drosophila simulans (strain wRi).